The sequence spans 249 residues: Type III pantothenate kinase (249 aa).

6–13 (DCGNSFIK) serves as a coordination point for ATP. Residues Tyr-93 and 100-103 (GMDR) each bind substrate. Asp-102 functions as the Proton acceptor in the catalytic mechanism. Asp-122 lines the K(+) pocket. Residue Thr-125 participates in ATP binding. Residue Thr-181 coordinates substrate.

This sequence belongs to the type III pantothenate kinase family. Homodimer. It depends on NH4(+) as a cofactor. K(+) serves as cofactor.

It localises to the cytoplasm. It carries out the reaction (R)-pantothenate + ATP = (R)-4'-phosphopantothenate + ADP + H(+). Its pathway is cofactor biosynthesis; coenzyme A biosynthesis; CoA from (R)-pantothenate: step 1/5. Its function is as follows. Catalyzes the phosphorylation of pantothenate (Pan), the first step in CoA biosynthesis. The chain is Type III pantothenate kinase from Pseudomonas putida (strain ATCC 47054 / DSM 6125 / CFBP 8728 / NCIMB 11950 / KT2440).